Consider the following 330-residue polypeptide: RNA polymerase sigma factor RpoS (330 aa).

The tract at residues 56–89 (DATQLYLGEIGYSPLLTAEEEVYFARRALRGDVA) is sigma-70 factor domain-1. Residues 94–164 (MIESNLRLVV…ERAIMNQTRT (71 aa)) form a sigma-70 factor domain-2 region. The Interaction with polymerase core subunit RpoC signature appears at 118–121 (DLIE). Residues 174-249 (ELNVYLRTAR…DEKENGPEDT (76 aa)) are sigma-70 factor domain-3. The segment at 262 to 315 (WLFELNAKQREVLARRFGLLGYEAATLEDVGREIGLTRERVRQIQVEGLRRLRE) is sigma-70 factor domain-4. The segment at residues 288 to 307 (LEDVGREIGLTRERVRQIQV) is a DNA-binding region (H-T-H motif).

Belongs to the sigma-70 factor family. RpoS subfamily. As to quaternary structure, interacts with the RNA polymerase core enzyme.

It is found in the cytoplasm. In terms of biological role, sigma factors are initiation factors that promote the attachment of RNA polymerase to specific initiation sites and are then released. This sigma factor is the master transcriptional regulator of the stationary phase and the general stress response. This is RNA polymerase sigma factor RpoS from Shigella flexneri.